The sequence spans 419 residues: eIF5-mimic protein 1 (419 aa).

Positions 1 to 22 (MNKHQKPVLTGQRFKTRKRDEK) are disordered. Lys-117 is subject to N6-acetyllysine. The W2 domain maps to 248–415 (VQQSLGTRKE…QNAEEESESE (168 aa)). Ser-412, Ser-414, and Ser-419 each carry phosphoserine.

The protein belongs to the BZW family. In terms of assembly, interacts with EIF3E, EIF2S2 and EIF3C.

It is found in the cytoplasm. In terms of biological role, translation initiation regulator which represses non-AUG initiated translation and repeat-associated non-AUG (RAN) initiated translation by acting as a competitive inhibitor of eukaryotic translation initiation factor 5 (EIF5) function. Increases the accuracy of translation initiation by impeding EIF5-dependent translation from non-AUG codons by competing with it for interaction with EIF2S2 within the 43S pre-initiation complex (PIC) in an EIF3C-binding dependent manner. This Mus musculus (Mouse) protein is eIF5-mimic protein 1 (Bzw2).